Here is a 759-residue protein sequence, read N- to C-terminus: Short transient receptor potential channel 1 (759 aa).

The disordered stretch occupies residues 1-30 (MMAALYPSTDLSGVSSSSLPSSPSSSSPNE). Topologically, residues 1 to 311 (MMAALYPSTD…FGQMSGYRRK (311 aa)) are cytoplasmic. Low complexity predominate over residues 15–28 (SSSSLPSSPSSSSP). ANK repeat units follow at residues 46–75 (LNEK…SGDL), 83–109 (LGRN…YGCQ), and 124–146 (MDVA…MLLK). Histidine 155, cysteine 159, cysteine 161, and cysteine 164 together coordinate Zn(2+). An intramembrane region (discontinuously helical) is located at residues 312–345 (PTCKKIMTVLTVGIFWPVLSLCYLIAPKSQFGRI). At 346–352 (IHTPFMK) the chain is on the cytoplasmic side. Residues 353 to 370 (FIIHGASYFTFLLLLNLY) form a helical membrane-spanning segment. The Extracellular portion of the chain corresponds to 371 to 388 (SLVYNEDKKNTMGPALER). The helical transmembrane segment at 389–405 (IDYLLILWIIGMIWSDI) threads the bilayer. Residues 406–421 (KRLWYEGLEDFLEESR) lie on the Cytoplasmic side of the membrane. The helical transmembrane segment at 422 to 441 (NQLSFVMNSLYLATFALKVV) threads the bilayer. At 442–462 (AHNKFHDFADRKDWDAFHPTL) the chain is on the extracellular side. Residues 463-483 (VAEGLFAFANVLSYLRLFFMY) form a helical membrane-spanning segment. Residues 484–502 (TTSSILGPLQISMGQMLQD) lie on the Cytoplasmic side of the membrane. The helical transmembrane segment at 503 to 524 (FGKFLGMFLLVLFSFTIGLTQL) threads the bilayer. At 525–589 (YDKGYTSKEQ…GEELQSFVGA (65 aa)) the chain is on the extracellular side. Cysteine 537 and cysteine 542 are disulfide-bonded. A helical membrane pass occupies residues 590 to 610 (VIVGTYNVVVVIVLTKLLVAM). The Cytoplasmic portion of the chain corresponds to 611–759 (LHKSFQLIAN…SKYAMFYPKN (149 aa)).

The protein belongs to the transient receptor (TC 1.A.4) family. STrpC subfamily. TRPC1 sub-subfamily. Heterotetramer with TRPC4 and/or TRPC5. Forms a heteromeric ion channel with TRPC4, with a 1:3 TRPC1:TRPC4 stoichiometry. Unlike other TRP channel proteins, does not form a homomeric channel. Interacts with TRPC4AP. Interacts with ITPR3. Interacts with MX1 and RNF24. Interacts with FKBP4. Interacts with PLSCR1. Interacts with PKD2L2. Forms a heterotetramer with PKD2 with a 2:2 stoichiometry; has distinct channel properties separate from PKD2 or TRPC1 homomers alone. In terms of processing, activation of PRKCA induces phosphorylation of TRPC1 and subsequent Ca2+ entry into cells. Expressed in brain, hippocampus, amygdala, Purkinje cells and single neurons in the cortex and striatum.

The protein resides in the cell membrane. It catalyses the reaction Ca(2+)(in) = Ca(2+)(out). The enzyme catalyses Na(+)(in) = Na(+)(out). The catalysed reaction is Li(+)(in) = Li(+)(out). It carries out the reaction Cs(+)(in) = Cs(+)(out). With respect to regulation, may be operated by a phosphatidylinositol second messenger system activated by receptor tyrosine kinases or G-protein coupled receptors. Also activated by intracellular calcium store depletion. Its function is as follows. Forms a receptor-activated non-selective calcium permeant cation channel. Forms a heteromeric ion channel with TRPC4 or TRPC5 that has reduced calcium permeability compared to the homomeric TRPC4 or TRPC5 channel. Also permeable to monovalent ions including sodium, lithium and cesium ions. The chain is Short transient receptor potential channel 1 (Trpc1) from Rattus norvegicus (Rat).